A 534-amino-acid chain; its full sequence is CTP synthase (534 aa).

The tract at residues 1-267 (MTKYIFVTGG…DQIVCDHLKL (267 aa)) is amidoligase domain. Ser13 lines the CTP pocket. Ser13 contributes to the UTP binding site. 14 to 19 (SIGKGI) is a binding site for ATP. Residue Tyr54 participates in L-glutamine binding. Asp71 is a binding site for ATP. Residues Asp71 and Glu141 each coordinate Mg(2+). CTP contacts are provided by residues 148–150 (DIE), 188–193 (KTKPTQ), and Lys224. UTP contacts are provided by residues 188–193 (KTKPTQ) and Lys224. Residue 240–242 (RDV) coordinates ATP. A Glutamine amidotransferase type-1 domain is found at 292–534 (KIALVGKYVE…FVTAAIKNSN (243 aa)). Position 354 (Gly354) interacts with L-glutamine. The active-site Nucleophile; for glutamine hydrolysis is Cys381. L-glutamine-binding positions include 382 to 385 (LGMQ), Glu405, and Arg463. Residues His508 and Glu510 contribute to the active site.

This sequence belongs to the CTP synthase family. Homotetramer.

It carries out the reaction UTP + L-glutamine + ATP + H2O = CTP + L-glutamate + ADP + phosphate + 2 H(+). It catalyses the reaction L-glutamine + H2O = L-glutamate + NH4(+). The enzyme catalyses UTP + NH4(+) + ATP = CTP + ADP + phosphate + 2 H(+). The protein operates within pyrimidine metabolism; CTP biosynthesis via de novo pathway; CTP from UDP: step 2/2. With respect to regulation, allosterically activated by GTP, when glutamine is the substrate; GTP has no effect on the reaction when ammonia is the substrate. The allosteric effector GTP functions by stabilizing the protein conformation that binds the tetrahedral intermediate(s) formed during glutamine hydrolysis. Inhibited by the product CTP, via allosteric rather than competitive inhibition. Catalyzes the ATP-dependent amination of UTP to CTP with either L-glutamine or ammonia as the source of nitrogen. Regulates intracellular CTP levels through interactions with the four ribonucleotide triphosphates. This Streptococcus pyogenes serotype M2 (strain MGAS10270) protein is CTP synthase.